A 65-amino-acid chain; its full sequence is Conotoxin mr5.1b (65 aa).

The N-terminal stretch at 1 to 19 (MRCVPVFVILLLLIASAPS) is a signal peptide. The propeptide occupies 20–48 (VDARLKTKDDMPLPSSHANIKRTLQMLRN). Residue Glu-60 is modified to 4-carboxyglutamate.

Belongs to the conotoxin T superfamily. Post-translationally, contains 2 disulfide bonds that can be either 'C1-C3, C2-C4' or 'C1-C4, C2-C3', since these disulfide connectivities have been observed for conotoxins with cysteine framework V (for examples, see AC P0DQQ7 and AC P81755). In terms of tissue distribution, expressed by the venom duct.

It is found in the secreted. The sequence is that of Conotoxin mr5.1b from Conus marmoreus (Marble cone).